A 98-amino-acid polypeptide reads, in one-letter code: Large ribosomal subunit protein uL23 (98 aa).

It belongs to the universal ribosomal protein uL23 family. As to quaternary structure, part of the 50S ribosomal subunit. Contacts protein L29, and trigger factor when it is bound to the ribosome.

Its function is as follows. One of the early assembly proteins it binds 23S rRNA. One of the proteins that surrounds the polypeptide exit tunnel on the outside of the ribosome. Forms the main docking site for trigger factor binding to the ribosome. In Methylobacterium sp. (strain 4-46), this protein is Large ribosomal subunit protein uL23.